The following is a 600-amino-acid chain: NADH-quinone oxidoreductase subunit C/D (600 aa).

The interval 1-190 (MVNNMTDLTA…SPFELTKAKQ (190 aa)) is NADH dehydrogenase I subunit C. The NADH dehydrogenase I subunit D stretch occupies residues 214-600 (DFMFLNLGPN…IDFVMSDVDR (387 aa)).

This sequence in the N-terminal section; belongs to the complex I 30 kDa subunit family. In the C-terminal section; belongs to the complex I 49 kDa subunit family. As to quaternary structure, NDH-1 is composed of 13 different subunits. Subunits NuoB, CD, E, F, and G constitute the peripheral sector of the complex.

The protein resides in the cell inner membrane. It catalyses the reaction a quinone + NADH + 5 H(+)(in) = a quinol + NAD(+) + 4 H(+)(out). Its function is as follows. NDH-1 shuttles electrons from NADH, via FMN and iron-sulfur (Fe-S) centers, to quinones in the respiratory chain. The immediate electron acceptor for the enzyme in this species is believed to be ubiquinone. Couples the redox reaction to proton translocation (for every two electrons transferred, four hydrogen ions are translocated across the cytoplasmic membrane), and thus conserves the redox energy in a proton gradient. This Escherichia coli (strain K12 / DH10B) protein is NADH-quinone oxidoreductase subunit C/D.